The chain runs to 235 residues: Phosphoribosylaminoimidazole-succinocarboxamide synthase (235 aa).

It belongs to the SAICAR synthetase family.

It carries out the reaction 5-amino-1-(5-phospho-D-ribosyl)imidazole-4-carboxylate + L-aspartate + ATP = (2S)-2-[5-amino-1-(5-phospho-beta-D-ribosyl)imidazole-4-carboxamido]succinate + ADP + phosphate + 2 H(+). The protein operates within purine metabolism; IMP biosynthesis via de novo pathway; 5-amino-1-(5-phospho-D-ribosyl)imidazole-4-carboxamide from 5-amino-1-(5-phospho-D-ribosyl)imidazole-4-carboxylate: step 1/2. In Chlorobaculum tepidum (strain ATCC 49652 / DSM 12025 / NBRC 103806 / TLS) (Chlorobium tepidum), this protein is Phosphoribosylaminoimidazole-succinocarboxamide synthase.